The sequence spans 586 residues: MASDLSKKRKFKDSKGSKPERALASSSKAKKLKRAPTPEDSDAERDNSSDPEIENQEPEVEVPGPPQDNSEDQEAEENANAFERQDEPAGLDSAIQKGDGSLLGPSVSTDAQAFSELNLSDKTMMSINEMGFTKMTEIQRRGIPPLLAGKDVLGAAKTGSGKTLAFLIPAIEMLNSLRFKPRNGTGVIVVTPTRELALQIFGVARELMKNHSQTYGVVIGGANIRAEEDKLGKGVNLLIATPGRLLDHLRRGSFVFKNLKSLIIDEADRILEVGFEDEMRHIVKILPKENRQTMLFSATQTTKVEDLARISLRPGPLYINVDEEKQFSTVEGLDQGYVIVDADKRFLLLFSFLKKMAKKKIIVFLSSCNSVKYYSELLQYIDLQVLDLHGKQKQQKRTNTFFEFCNAKQGTLICTDVAARGLDIPQVDWIVQFDPPDDPRDYIHRVGRTARGNNTKGRSLLFLQPCELGFLAHLKAAKVPVVEYDFPKNKILNVQSQLEKLIGSNYYLNQSAKDGYRSYLHAYASHSLRSVFDVQKLDMVKVAKGFGFSTPPRVDITLGAGMSRDKKPQARRAYGSQPRQSGHQRR.

The interval 1-107 is disordered; sequence MASDLSKKRK…GDGSLLGPSV (107 aa). Residues 39-60 show a composition bias toward acidic residues; sequence EDSDAERDNSSDPEIENQEPEV. Residues 112–140 carry the Q motif motif; the sequence is QAFSELNLSDKTMMSINEMGFTKMTEIQR. A Helicase ATP-binding domain is found at 143 to 318; that stretch reads IPPLLAGKDV…RISLRPGPLY (176 aa). 156–163 is a binding site for ATP; the sequence is AKTGSGKT. A DEAD box motif is present at residues 265–268; sequence DEAD. One can recognise a Helicase C-terminal domain in the interval 332-502; the sequence is GLDQGYVIVD…NVQSQLEKLI (171 aa). The tract at residues 557–586 is disordered; it reads TLGAGMSRDKKPQARRAYGSQPRQSGHQRR. The span at 577–586 shows a compositional bias: polar residues; the sequence is QPRQSGHQRR.

The protein belongs to the DEAD box helicase family. DDX18/HAS1 subfamily. Associates in the nucleolus with the 60S and pre-60S ribosomal subunits.

Its subcellular location is the nucleus. It is found in the nucleolus. The catalysed reaction is ATP + H2O = ADP + phosphate + H(+). Functionally, ATP-dependent RNA helicase involved in 40S ribosomal subunit biogenesis. Required for the processing and cleavage of 35S pre-rRNA at sites A0, A1, and A2, leading to mature 18S rRNA. The protein is ATP-dependent RNA helicase HAS1 (HAS1) of Chaetomium globosum (strain ATCC 6205 / CBS 148.51 / DSM 1962 / NBRC 6347 / NRRL 1970) (Soil fungus).